The sequence spans 202 residues: Nucleoside triphosphate pyrophosphatase (202 aa).

Asp-79 serves as the catalytic Proton acceptor.

The protein belongs to the Maf family. A divalent metal cation serves as cofactor.

It is found in the cytoplasm. It carries out the reaction a ribonucleoside 5'-triphosphate + H2O = a ribonucleoside 5'-phosphate + diphosphate + H(+). The catalysed reaction is a 2'-deoxyribonucleoside 5'-triphosphate + H2O = a 2'-deoxyribonucleoside 5'-phosphate + diphosphate + H(+). Nucleoside triphosphate pyrophosphatase. May have a dual role in cell division arrest and in preventing the incorporation of modified nucleotides into cellular nucleic acids. This Rhodospirillum rubrum (strain ATCC 11170 / ATH 1.1.1 / DSM 467 / LMG 4362 / NCIMB 8255 / S1) protein is Nucleoside triphosphate pyrophosphatase.